The sequence spans 425 residues: Proteinase-activated receptor 1 (425 aa).

A signal peptide spans 1-21; it reads MGPRRLLLVAACFSLCGPLLS. Residues 22 to 41 constitute a propeptide that is removed on maturation; it reads ARTRARRPESKATNATLDPR. Residues N35, N62, and N75 are each glycosylated (N-linked (GlcNAc...) asparagine). Topologically, residues 42–102 are extracellular; sequence SFLLRNPNDK…SGYLTSSWLT (61 aa). Residues 103-128 traverse the membrane as a helical segment; sequence LFVPSVYTGVFVVSLPLNIMAIVVFI. At 129-137 the chain is on the cytoplasmic side; that stretch reads LKMKVKKPA. A helical membrane pass occupies residues 138–157; the sequence is VVYMLHLATADVLFVSVLPF. Residues 158–176 lie on the Extracellular side of the membrane; sequence KISYYFSGSDWQFGSELCR. C175 and C254 form a disulfide bridge. A helical membrane pass occupies residues 177–198; that stretch reads FVTAAFYCNMYASILLMTVISI. At 199–218 the chain is on the cytoplasmic side; sequence DRFLAVVYPMQSLSWRTLGR. Residues 219-239 form a helical membrane-spanning segment; the sequence is ASFTCLAIWALAIAGVVPLLL. Residues 240 to 268 are Extracellular-facing; that stretch reads KEQTIQVPGLNITTCHDVLNETLLEGYYA. N-linked (GlcNAc...) asparagine glycosylation is found at N250 and N259. A helical transmembrane segment spans residues 269 to 288; it reads YYFSAFSAVFFFVPLIISTV. At 289–311 the chain is on the cytoplasmic side; that stretch reads CYVSIIRCLSSSAVANRSKKSRA. Residues 312-334 form a helical membrane-spanning segment; sequence LFLSAAVFCIFIICFGPTNVLLI. Residues 335–350 lie on the Extracellular side of the membrane; it reads AHYSFLSHTSTTEAAY. Residues 351 to 374 traverse the membrane as a helical segment; the sequence is FAYLLCVCVSSISCCIDPLIYYYA. The Cytoplasmic portion of the chain corresponds to 375–425; that stretch reads SSECQRYVYSILCCKESSDPSSYNSSGQLMASKMDTCSSNLNNSIYKKLLT. A Phosphoserine modification is found at S418.

The protein belongs to the G-protein coupled receptor 1 family. In terms of processing, proteolytic cleavage by thrombin generates a new N-terminus that functions as a tethered ligand. Also proteolytically cleaved by cathepsin CTSG. Cleavage at 41-Arg-|-Ser-42 by CTSG results in receptor activation while cleavage at 55-Phe-|-Trp-56 results in inhibition of receptor activation. Phosphorylated in the C-terminal tail; probably mediating desensitization prior to the uncoupling and internalization of the receptor. As to expression, platelets and vascular endothelial cells.

Its subcellular location is the cell membrane. In terms of biological role, high affinity receptor that binds the activated thrombin, leading to calcium release from intracellular stores. The thrombin-activated receptor signaling pathway is mediated through PTX-insensitive G proteins, activation of phospholipase C resulting in the production of 1D-myo-inositol 1,4,5-trisphosphate (InsP3) which binds to InsP3 receptors causing calcium release from the stores. In astrocytes, the calcium released into the cytosol allows the Ca(2+)-dependent release of L-glutamate into the synaptic cleft through BEST1, that targets the neuronal postsynaptic GRIN2A/NMDAR receptor resulting in the synaptic plasticity regulation. May play a role in platelets activation and in vascular development. Mediates up-regulation of pro-inflammatory cytokines, such as MCP-1/CCL2 and IL6, triggered by coagulation factor Xa (F10) in cardiac fibroblasts and umbilical vein endothelial cells. The polypeptide is Proteinase-activated receptor 1 (Homo sapiens (Human)).